The following is a 460-amino-acid chain: Light-independent protochlorophyllide reductase subunit N (460 aa).

Residues C20, C45, and C105 each coordinate [4Fe-4S] cluster.

The protein belongs to the BchN/ChlN family. Protochlorophyllide reductase is composed of three subunits; ChlL, ChlN and ChlB. Forms a heterotetramer of two ChlB and two ChlN subunits. [4Fe-4S] cluster is required as a cofactor.

It is found in the plastid. It localises to the chloroplast. The enzyme catalyses chlorophyllide a + oxidized 2[4Fe-4S]-[ferredoxin] + 2 ADP + 2 phosphate = protochlorophyllide a + reduced 2[4Fe-4S]-[ferredoxin] + 2 ATP + 2 H2O. It functions in the pathway porphyrin-containing compound metabolism; chlorophyll biosynthesis (light-independent). Component of the dark-operative protochlorophyllide reductase (DPOR) that uses Mg-ATP and reduced ferredoxin to reduce ring D of protochlorophyllide (Pchlide) to form chlorophyllide a (Chlide). This reaction is light-independent. The NB-protein (ChlN-ChlB) is the catalytic component of the complex. In Adiantum capillus-veneris (Maidenhair fern), this protein is Light-independent protochlorophyllide reductase subunit N.